The chain runs to 205 residues: Golgi to ER traffic protein 1 (205 aa).

Residues 1–9 are Lumenal-facing; that stretch reads MFELQPSSI. The helical transmembrane segment at 10–29 threads the bilayer; that stretch reads VVLVFCVLAIKVCISLIGKT. Residues 30–116 lie on the Cytoplasmic side of the membrane; sequence TIQDRIWYLY…QISKLVNLAI (87 aa). Residues 53-103 adopt a coiled-coil conformation; it reads ALAQKREELVRVNKERRAISAQDEYAKWTKLNRQFDKLNSEVNDLAEATSS. A helical membrane pass occupies residues 117–137; the sequence is AATTTAPIWFSRIWYRKVVLF. Over 138–161 the chain is Lumenal; it reads YLPPKVFPYYIEWVLALPFIVTGG. A helical membrane pass occupies residues 162 to 178; sequence VGLTVWMFALNSVLSSL. Residues 179 to 205 are Cytoplasmic-facing; that stretch reads EFLIKFYLEEPVKKPEAPAASEAQTKQ.

This sequence belongs to the WRB/GET1 family. As to quaternary structure, component of the Golgi to ER traffic (GET) complex, which is composed of GET1, GET2 and GET3. Within the complex, GET1 and GET2 form a heterotetramer which is stabilized by phosphatidylinositol binding and which binds to the GET3 homodimer.

Its subcellular location is the endoplasmic reticulum membrane. The protein resides in the golgi apparatus membrane. Its function is as follows. Required for the post-translational delivery of tail-anchored (TA) proteins to the endoplasmic reticulum. Together with GET2, acts as a membrane receptor for soluble GET3, which recognizes and selectively binds the transmembrane domain of TA proteins in the cytosol. The GET complex cooperates with the HDEL receptor ERD2 to mediate the ATP-dependent retrieval of resident ER proteins that contain a C-terminal H-D-E-L retention signal from the Golgi to the ER. This is Golgi to ER traffic protein 1 from Clavispora lusitaniae (strain ATCC 42720) (Yeast).